Here is a 189-residue protein sequence, read N- to C-terminus: Thermostable direct hemolysin (189 aa).

The signal sequence occupies residues 1-24 (MKYRHLAKKSFLFIFMLAAFKTFA). Cysteine 175 and cysteine 185 are oxidised to a cystine.

This sequence belongs to the TDH hemolysin family. As to quaternary structure, homodimer.

Functionally, bacterial hemolysins are exotoxins that attack blood cell membranes and cause cell rupture by mechanisms not clearly defined. The sequence is that of Thermostable direct hemolysin (tdh) from Grimontia hollisae (Vibrio hollisae).